We begin with the raw amino-acid sequence, 315 residues long: Olfactory receptor 5P59 (315 aa).

At 1-28 (MAFLQDGNHTAVTEFILLGLTDDPVLRV) the chain is on the extracellular side. N-linked (GlcNAc...) asparagine glycosylation occurs at N8. A helical transmembrane segment spans residues 29-49 (VLFTIILCIYLVTVFGNLSTI). The Cytoplasmic portion of the chain corresponds to 50–57 (LLIRVSSQ). The helical transmembrane segment at 58–78 (LHHPMYFFLSHLASVDIGISS) threads the bilayer. At 79 to 102 (SVTPSMLVNFLLERSTISYLGCGI) the chain is on the extracellular side. Cysteines 100 and 193 form a disulfide. Residues 103–123 (QLGSADFIASVECFLLAAMAY) form a helical membrane-spanning segment. Topologically, residues 124-136 (DRFMAVCNPLLYS) are cytoplasmic. The chain crosses the membrane as a helical span at residues 137–157 (TKMSTQVCVQLVVGSYIGGFL). The Extracellular portion of the chain corresponds to 158 to 200 (NASLIVTVYFFSFLFCGPNRIDHFFCDFAPLAELSCSDVSVSV). A helical transmembrane segment spans residues 201 to 221 (LIISFSAGSVTMITVFVIVIS). The Cytoplasmic segment spans residues 222-241 (YSYILITILKMHSTEGRHKA). Residues 242–262 (FSTCTSHLTAVTLYYGTITFI) traverse the membrane as a helical segment. Over 263 to 275 (YVMPKSSFSTDQN) the chain is Extracellular. A helical membrane pass occupies residues 276-296 (KVVSVFYMVMIPMLNPLIYSL). Topologically, residues 297 to 315 (SNNEIKGALKRQLGMKTLS) are cytoplasmic.

Belongs to the G-protein coupled receptor 1 family.

The protein resides in the cell membrane. Its function is as follows. Potential odorant receptor. The sequence is that of Olfactory receptor 5P59 from Mus musculus (Mouse).